A 75-amino-acid polypeptide reads, in one-letter code: Brevinin-2SN1 (75 aa).

The first 22 residues, 1–22, serve as a signal peptide directing secretion; sequence MFTMKKPLLFLFFLGTISLSFC. A propeptide spans 23 to 40 (removed in mature form); it reads EEERGADEDDEVEMTEEE. A disulfide bridge links cysteine 69 with cysteine 75.

This sequence belongs to the frog skin active peptide (FSAP) family. Brevinin subfamily. Expressed by the skin glands.

The protein localises to the secreted. Antimicrobial peptide. Active against some Gram-negative and a variety of Gram-positive bacterial strains. Active against fungus C.glabrata 090902 but not against C.albicans ATCC 10231. Shows hemolytic activity against human erythrocytes. This is Brevinin-2SN1 from Sylvirana spinulosa (Fine-spined frog).